A 237-amino-acid polypeptide reads, in one-letter code: Nodulation protein NolA (237 aa).

Residues Arg-10 to Gly-79 form the HTH merR-type domain. Positions Ile-13 to His-32 form a DNA-binding region, H-T-H motif.

In terms of biological role, involved in genotype-specific nodulation of soybeans. The sequence is that of Nodulation protein NolA (nolA) from Bradyrhizobium diazoefficiens (strain JCM 10833 / BCRC 13528 / IAM 13628 / NBRC 14792 / USDA 110).